A 56-amino-acid polypeptide reads, in one-letter code: Large ribosomal subunit protein bL32 (56 aa).

The protein belongs to the bacterial ribosomal protein bL32 family.

This Prochlorococcus marinus (strain MIT 9301) protein is Large ribosomal subunit protein bL32.